The chain runs to 287 residues: Protease HtpX (287 aa).

Helical transmembrane passes span 4–24 (VLLFLATNMAILLVVSVVFNI) and 37–57 (VGLLVFCALFGFGGAFVSLWI). His143 serves as a coordination point for Zn(2+). The active site involves Glu144. Residue His147 coordinates Zn(2+). Transmembrane regions (helical) follow at residues 158–178 (LIQGVINTFVMFFARIIASAI) and 194–214 (GVVMLLEIVFGVLASTIVMWF). Glu219 is a Zn(2+) binding site.

Belongs to the peptidase M48B family. It depends on Zn(2+) as a cofactor.

The protein localises to the cell inner membrane. In Idiomarina loihiensis (strain ATCC BAA-735 / DSM 15497 / L2-TR), this protein is Protease HtpX.